The primary structure comprises 414 residues: ATP-dependent Clp protease ATP-binding subunit ClpX (414 aa).

The region spanning 1–51 (MADSKTKKKCSFCGRSENEVGFLITGMNGYICDSCATQAYEITQEALGEGR) is the ClpX-type ZB domain. Zn(2+)-binding residues include Cys-10, Cys-13, Cys-32, and Cys-35. Position 120–127 (120–127 (STGTGKTL)) interacts with ATP.

This sequence belongs to the ClpX chaperone family. Component of the ClpX-ClpP complex. Forms a hexameric ring that, in the presence of ATP, binds to fourteen ClpP subunits assembled into a disk-like structure with a central cavity, resembling the structure of eukaryotic proteasomes.

Its function is as follows. ATP-dependent specificity component of the Clp protease. It directs the protease to specific substrates. Can perform chaperone functions in the absence of ClpP. This chain is ATP-dependent Clp protease ATP-binding subunit ClpX, found in Bacteroides thetaiotaomicron (strain ATCC 29148 / DSM 2079 / JCM 5827 / CCUG 10774 / NCTC 10582 / VPI-5482 / E50).